Reading from the N-terminus, the 225-residue chain is Histone H1.11L (225 aa).

2 stretches are compositionally biased toward low complexity: residues 1–23 (MSET…PAKA) and 31–43 (AAGG…PAGP). Disordered stretches follow at residues 1 to 46 (MSET…PSVT) and 94 to 225 (SKGT…AKKK). Ser2 is subject to N-acetylserine. The H15 domain occupies 41-114 (AGPSVTELIT…GASGSFRLSK (74 aa)). Composition is skewed to basic residues over residues 123-138 (APKK…KPAA), 146-163 (KKPK…KAKK), 171-189 (KSAK…KKAV), and 198-225 (KAVK…AKKK).

It belongs to the histone H1/H5 family.

It localises to the nucleus. It is found in the chromosome. Its function is as follows. Histones H1 are necessary for the condensation of nucleosome chains into higher-order structures. This Gallus gallus (Chicken) protein is Histone H1.11L.